We begin with the raw amino-acid sequence, 106 residues long: Iron-sulfur cluster assembly protein CyaY (106 aa).

This sequence belongs to the frataxin family.

In terms of biological role, involved in iron-sulfur (Fe-S) cluster assembly. May act as a regulator of Fe-S biogenesis. This is Iron-sulfur cluster assembly protein CyaY from Salmonella arizonae (strain ATCC BAA-731 / CDC346-86 / RSK2980).